The chain runs to 283 residues: Dihydropteroate synthase (283 aa).

One can recognise a Pterin-binding domain in the interval 18 to 274; that stretch reads PKIMGIVNLT…DVKATADALK (257 aa). Asn-25 is a binding site for Mg(2+). Residues Thr-66, Asp-99, Asn-119, Asp-190, Lys-227, and 262–264 contribute to the (7,8-dihydropterin-6-yl)methyl diphosphate site; that span reads RVH.

It belongs to the DHPS family. Homodimer. It depends on Mg(2+) as a cofactor.

The catalysed reaction is (7,8-dihydropterin-6-yl)methyl diphosphate + 4-aminobenzoate = 7,8-dihydropteroate + diphosphate. The protein operates within cofactor biosynthesis; tetrahydrofolate biosynthesis; 7,8-dihydrofolate from 2-amino-4-hydroxy-6-hydroxymethyl-7,8-dihydropteridine diphosphate and 4-aminobenzoate: step 1/2. Its function is as follows. Catalyzes the condensation of para-aminobenzoate (pABA) with 6-hydroxymethyl-7,8-dihydropterin diphosphate (DHPt-PP) to form 7,8-dihydropteroate (H2Pte), the immediate precursor of folate derivatives. The sequence is that of Dihydropteroate synthase (folP) from Neisseria meningitidis serogroup C.